A 431-amino-acid chain; its full sequence is Tyrosine--tRNA ligase (431 aa).

Tyrosine 34 is an L-tyrosine binding site. The short motif at proline 39 to histidine 48 is the 'HIGH' region element. Positions 171 and 175 each coordinate L-tyrosine. The short motif at lysine 231 to threonine 235 is the 'KMSKS' region element. An ATP-binding site is contributed by lysine 234. One can recognise an S4 RNA-binding domain in the interval isoleucine 353–lysine 422.

This sequence belongs to the class-I aminoacyl-tRNA synthetase family. TyrS type 1 subfamily. As to quaternary structure, homodimer.

It is found in the cytoplasm. The catalysed reaction is tRNA(Tyr) + L-tyrosine + ATP = L-tyrosyl-tRNA(Tyr) + AMP + diphosphate + H(+). In terms of biological role, catalyzes the attachment of tyrosine to tRNA(Tyr) in a two-step reaction: tyrosine is first activated by ATP to form Tyr-AMP and then transferred to the acceptor end of tRNA(Tyr). The polypeptide is Tyrosine--tRNA ligase (Neisseria gonorrhoeae (strain ATCC 700825 / FA 1090)).